A 481-amino-acid chain; its full sequence is Zinc metalloproteinase/disintegrin (481 aa).

A signal peptide spans 1–20 (MIQVLLVTICLAVFPYQGSS). The propeptide occupies 21–190 (IILESGNVDD…KASQLYLTPE (170 aa)). The 196-residue stretch at 197 to 392 (RYIKLAIVVD…DNPQCILNAP (196 aa)) folds into the Peptidase M12B domain. 3 disulfide bridges follow: cysteine 308/cysteine 387, cysteine 349/cysteine 371, and cysteine 351/cysteine 354. Histidine 333 provides a ligand contact to Zn(2+). Glutamate 334 is an active-site residue. Zn(2+) contacts are provided by histidine 337 and histidine 343. Residues 393–408 (LRTDTVSTPVSGNEFL) constitute a propeptide that is removed on maturation. One can recognise a Disintegrin domain in the interval 400 to 481 (TPVSGNEFLE…ADCPRNGLYS (82 aa)). 6 disulfides stabilise this stretch: cysteine 414–cysteine 429, cysteine 416–cysteine 424, cysteine 423–cysteine 446, cysteine 437–cysteine 443, cysteine 442–cysteine 467, and cysteine 455–cysteine 474. The Cell attachment site motif lies at 459–461 (RGD).

It belongs to the venom metalloproteinase (M12B) family. P-II subfamily. P-IIa sub-subfamily. As to quaternary structure, monomer. It depends on Zn(2+) as a cofactor. Expressed by the venom gland.

Its subcellular location is the secreted. In terms of biological role, impairs hemostasis in the envenomed animal. Its function is as follows. Inhibits platelet aggregation induced by ADP, thrombin, platelet-activating factor and collagen. Acts by inhibiting fibrinogen interaction with platelet receptors GPIIb/GPIIIa (ITGA2B/ITGB3). The chain is Zinc metalloproteinase/disintegrin from Protobothrops elegans (Elegant pitviper).